The chain runs to 313 residues: Homoserine O-succinyltransferase (313 aa).

The active-site Acyl-thioester intermediate is the Cys-142. Substrate contacts are provided by Lys-163 and Ser-192. His-235 acts as the Proton acceptor in catalysis. Residue Glu-237 is part of the active site. Residue Arg-249 coordinates substrate.

This sequence belongs to the MetA family.

The protein localises to the cytoplasm. The enzyme catalyses L-homoserine + succinyl-CoA = O-succinyl-L-homoserine + CoA. Its pathway is amino-acid biosynthesis; L-methionine biosynthesis via de novo pathway; O-succinyl-L-homoserine from L-homoserine: step 1/1. Its function is as follows. Transfers a succinyl group from succinyl-CoA to L-homoserine, forming succinyl-L-homoserine. The chain is Homoserine O-succinyltransferase from Shewanella baltica (strain OS195).